The following is a 246-amino-acid chain: MTMDKSELVQKAKLAEQAERYDDMAAAMKAVTEQGHELSNEERNLLSVAYKNVVGARRSSWRVISSIEQKTERNEKKQQMGKEYREKIEAELQDICNDVLELLDKYLILNATQAESKVFYLKMKGDYFRYLSEVASGENKQTTVSNSQQAYQEAFEISKKEMQPTHPIRLGLALNFSVFYYEILNSPEKACSLAKTAFDEAIAELDTLNEESYKDSTLIMQLLRDNLTLWTSENQGDEGDAGEGEN.

N-acetylmethionine is present on M1. T2 is subject to N-acetylthreonine; in 14-3-3 protein beta/alpha, N-terminally processed. T2 carries the post-translational modification Phosphothreonine. Position 5 is an N6-acetyllysine (K5). The residue at position 51 (K51) is an N6-acetyllysine; alternate. K51 is covalently cross-linked (Glycyl lysine isopeptide (Lys-Gly) (interchain with G-Cter in SUMO2); alternate). S60 carries the phosphoserine modification. An N6-acetyllysine modification is found at K70. Residues Y84 and Y106 each carry the 3'-nitrotyrosine modification. K117 carries the N6-acetyllysine modification. Residues S186 and S232 each carry the phosphoserine modification.

It belongs to the 14-3-3 family. Homodimer. Interacts with SAMSN1 and PRKCE. Interacts with AKAP13. Interacts with SSH1 and TORC2/CRTC2. Interacts with ABL1; the interaction results in cytoplasmic location of ABL1 and inhibition of cABL-mediated apoptosis. Interacts with ROR2 (dimer); the interaction results in phosphorylation of YWHAB on tyrosine residues. Interacts with GAB2. Interacts with YAP1 (phosphorylated form). Interacts with the phosphorylated (by AKT1) form of SRPK2. Interacts with PKA-phosphorylated AANAT. Interacts with MYO1C. Interacts with SIRT2. Interacts with the 'Thr-369' phosphorylated form of DAPK2. Interacts with PI4KB, TBC1D22A and TBC1D22B. Interacts with the 'Ser-1134' and 'Ser-1161' phosphorylated form of SOS1. Interacts (via phosphorylated form) with YWHAB; this interaction occurs in a protein kinase AKT1-dependent manner. Interacts with SLITRK1. Interacts with SYNPO2 (phosphorylated form); YWHAB competes with ACTN2 for interaction with SYNPO2. Interacts with RIPOR2 (via phosphorylated form); this interaction occurs in a chemokine-dependent manner and does not compete for binding of RIPOR2 with RHOA nor blocks inhibition of RIPOR2-mediated RHOA activity. Interacts with MARK2 and MARK3. Interacts with TESK1; the interaction is dependent on the phosphorylation of TESK1 'Ser-439' and inhibits TESK1 kinase activity. Interacts with MEFV. Interacts with HDAC4. Interacts with ADAM22 (via C-terminus). Post-translationally, isoform alpha differs from isoform beta in being phosphorylated. Phosphorylated on Ser-60 by protein kinase C delta type catalytic subunit in a sphingosine-dependent fashion. In terms of processing, isoform Short contains a N-acetylmethionine at position 1.

The protein localises to the cytoplasm. The protein resides in the melanosome. Adapter protein implicated in the regulation of a large spectrum of both general and specialized signaling pathways. Binds to a large number of partners, usually by recognition of a phosphoserine or phosphothreonine motif. Binding generally results in the modulation of the activity of the binding partner. Negative regulator of osteogenesis. Blocks the nuclear translocation of the phosphorylated form (by AKT1) of SRPK2 and antagonizes its stimulatory effect on cyclin D1 expression resulting in blockage of neuronal apoptosis elicited by SRPK2. Negative regulator of signaling cascades that mediate activation of MAP kinases via AKAP13. The protein is 14-3-3 protein beta/alpha (Ywhab) of Mus musculus (Mouse).